A 230-amino-acid chain; its full sequence is Complex I assembly factor TMEM126B, mitochondrial (230 aa).

Helical transmembrane passes span 70–92 (LNIHGTLVFGTSSSLSGIMANLV), 107–126 (YASLTTLPVLATIVSYKLFV), 139–161 (SCVLRSALIGMACGVSYPSALAF), and 196–218 (AMAIPLFFQIVMGAFTGLHHYNI).

Belongs to the TMEM126 family. As to quaternary structure, part of the mitochondrial complex I assembly/MCIA complex that comprises at least the core subunits TMEM126B, NDUFAF1, ECSIT and ACAD9 and complement subunits such as COA1 and TMEM186. Associates with the intermediate 370 kDa subcomplex of incompletely assembled complex I. Interacts with TMEM70.

The protein resides in the mitochondrion membrane. Functionally, as part of the MCIA complex, involved in the assembly of the mitochondrial complex I. Participates in constructing the membrane arm of complex I. In Mus musculus (Mouse), this protein is Complex I assembly factor TMEM126B, mitochondrial.